The sequence spans 455 residues: Chromosomal replication initiator protein DnaA 2 (455 aa).

A domain I, interacts with DnaA modulators region spans residues 1-95; that stretch reads MLTCNDCSTW…KRSSPLVTPS (95 aa). The interval 96–112 is domain II; the sequence is IAKPATEVSEENKDFQL. A domain III, AAA+ region region spans residues 113–328; that stretch reads KLNGAYRFDN…GAINKLTAYC (216 aa). ATP is bound by residues Gly157, Gly159, Lys160, and Thr161. A domain IV, binds dsDNA region spans residues 329 to 455; that stretch reads LLFNKPLTET…IAIDSPQHFV (127 aa).

Belongs to the DnaA family. Oligomerizes as a right-handed, spiral filament on DNA at oriC.

The protein localises to the cytoplasm. Its function is as follows. Plays an essential role in the initiation and regulation of chromosomal replication. ATP-DnaA binds to the origin of replication (oriC) to initiate formation of the DNA replication initiation complex once per cell cycle. Binds the DnaA box (a 9 base pair repeat at the origin) and separates the double-stranded (ds)DNA. Forms a right-handed helical filament on oriC DNA; dsDNA binds to the exterior of the filament while single-stranded (ss)DNA is stabiized in the filament's interior. The ATP-DnaA-oriC complex binds and stabilizes one strand of the AT-rich DNA unwinding element (DUE), permitting loading of DNA polymerase. After initiation quickly degrades to an ADP-DnaA complex that is not apt for DNA replication. Binds acidic phospholipids. This chain is Chromosomal replication initiator protein DnaA 2, found in Chlamydia trachomatis serovar D (strain ATCC VR-885 / DSM 19411 / UW-3/Cx).